The primary structure comprises 402 residues: Queuine tRNA-ribosyltransferase-like protein (402 aa).

This sequence belongs to the queuine tRNA-ribosyltransferase family.

In Theileria parva (East coast fever infection agent), this protein is Queuine tRNA-ribosyltransferase-like protein.